The chain runs to 86 residues: Large ribosomal subunit protein bL31 (86 aa).

Residues 65–86 (YGMGSANSATSKEQKEEKDSNK) are disordered. Basic and acidic residues predominate over residues 76–86 (KEQKEEKDSNK).

This sequence belongs to the bacterial ribosomal protein bL31 family. Type A subfamily. As to quaternary structure, part of the 50S ribosomal subunit.

Functionally, binds the 23S rRNA. In Prochlorococcus marinus (strain MIT 9312), this protein is Large ribosomal subunit protein bL31.